The sequence spans 517 residues: Histone H4 transcription factor (517 aa).

3 consecutive C2H2-type zinc fingers follow at residues 15–39 (LQCE…VTQH), 129–153 (FLCL…VEAH), and 169–193 (VLCG…LRSH). A C2H2-type 4; degenerate zinc finger spans residues 199 to 221 (VACPTCGGMFANNTKFLDHIRRQ). 5 consecutive C2H2-type zinc fingers follow at residues 229–251 (FQCS…MRNH), 255–278 (YKCP…RFRH), 284–306 (FKCD…LDTH), 312–337 (YRCD…RKVH), and 345–368 (YKCH…RKKH). Residues 373–517 (PSGHPRFRYK…IAEEPEIQMV (145 aa)) are interaction with NPAT. The tract at residues 374–407 (SGHPRFRYKEHEDGYMRLQLVRYESVELTQQLLR) is required for activation of histone H4 transcription and contributes to DNA-binding. The tract at residues 431–460 (TVPGEPGRKEEEEEGKGSEGTALSASQDNP) is disordered. The segment covering 451–460 (TALSASQDNP) has biased composition (polar residues).

As to quaternary structure, binds MBD2 and a histone deacetylase complex. Interacts with NPAT. Ubiquitinated. Ubiquitination may lead to proteasome-mediated degradation. As to expression, ubiquitous. Highly expressed in brain, heart, skeletal muscle, spleen, kidney, small intestine, placenta and liver.

The protein localises to the nucleus. Functionally, transcriptional repressor that binds to the consensus sequence 5'-CGGACGTT-3' and to the RB1 promoter. Transcriptional activator that promotes histone H4 gene transcription at the G1/S phase transition in conjunction with NPAT. Also activates transcription of the ATM and PRKDC genes. Autoregulates its expression by associating with its own promoter. The sequence is that of Histone H4 transcription factor (HINFP) from Homo sapiens (Human).